The chain runs to 234 residues: DNA repair protein RecO (234 aa).

Belongs to the RecO family.

Its function is as follows. Involved in DNA repair and RecF pathway recombination. This chain is DNA repair protein RecO, found in Hamiltonella defensa subsp. Acyrthosiphon pisum (strain 5AT).